Consider the following 255-residue polypeptide: MVPGRVLMWGALALTAVMSACGGEDIAADHVASYGLNVYQSYGPSGYYTHEFDGDEEFYVDLGKKETVWQLPLFSKFRSFDPQGALRNIATAKHNLNILIKRSNNTAAVNQVPEVTVFPKSPVMLGQPNTLICHVDNIFPPVINITWLKNGHSVTEGFSETSFLSKNDHSFLKISYLTFLPSDDDFYDCKVEHWGLDKPLLKHWEPEIPAPMSELTETVVCALGLIVGLVGIVVGTVFIIQGLRSGGPSRHQGSL.

Residues 1 to 23 (MVPGRVLMWGALALTAVMSACGG) form the signal peptide. Positions 24–120 (EDIAADHVAS…QVPEVTVFPK (97 aa)) are alpha-1. At 24–217 (EDIAADHVAS…IPAPMSELTE (194 aa)) the chain is on the extracellular side. 2 N-linked (GlcNAc...) asparagine glycosylation sites follow: Asn104 and Asn144. Residues 113–205 (PEVTVFPKSP…LDKPLLKHWE (93 aa)) enclose the Ig-like C1-type domain. The tract at residues 121–204 (SPVMLGQPNT…GLDKPLLKHW (84 aa)) is alpha-2. Cys133 and Cys189 are disulfide-bonded. The segment at 205–217 (EPEIPAPMSELTE) is connecting peptide. Residues 218–240 (TVVCALGLIVGLVGIVVGTVFII) traverse the membrane as a helical segment. Over 241–255 (QGLRSGGPSRHQGSL) the chain is Cytoplasmic.

Belongs to the MHC class II family.

The protein localises to the membrane. In Sus scrofa (Pig), this protein is SLA class II histocompatibility antigen, DQ haplotype D alpha chain.